Here is a 69-residue protein sequence, read N- to C-terminus: VLIIAVLFLTACQLTTAETYSRGRQKHRARRSTDKNSKWTRECTRSGGACNSHTQCCDHFCSTATSTCI.

A signal peptide spans 1–17 (VLIIAVLFLTACQLTTA). A propeptide spanning residues 18-41 (ETYSRGRQKHRARRSTDKNSKWTR) is cleaved from the precursor. 3 disulfides stabilise this stretch: Cys43-Cys57, Cys50-Cys61, and Cys56-Cys68.

The protein belongs to the conotoxin O1 superfamily. In terms of tissue distribution, expressed by the venom duct.

It localises to the secreted. The chain is Conotoxin Eb6.20 (E1) from Conus ebraeus (Hebrew cone).